A 276-amino-acid polypeptide reads, in one-letter code: Undecaprenyl-diphosphatase (276 aa).

Transmembrane regions (helical) follow at residues 46-66, 94-114, 122-142, 152-172, 196-216, 226-246, and 253-273; these read AGASFAAVIQLGSLGAVLIYF, LMGILVGTLPIVIAGWAVKAI, LWVVAAAAIGLALALGWAERV, LGIGDGLWVGLAQALALIPGV, SFLLGIPALFLAGVAEFIAEF, LGTLSAFVFSYGSIDWLIRFL, and VFIVYRIGFGLFIFLGLALGF.

The protein belongs to the UppP family.

The protein resides in the cell inner membrane. The enzyme catalyses di-trans,octa-cis-undecaprenyl diphosphate + H2O = di-trans,octa-cis-undecaprenyl phosphate + phosphate + H(+). Functionally, catalyzes the dephosphorylation of undecaprenyl diphosphate (UPP). Confers resistance to bacitracin. This Synechococcus sp. (strain JA-3-3Ab) (Cyanobacteria bacterium Yellowstone A-Prime) protein is Undecaprenyl-diphosphatase.